The primary structure comprises 85 residues: U4-theraphotoxin-Hhn1a (85 aa).

The first 22 residues, 1 to 22 (MKMTLIAILTCAAVLVLHITAA), serve as a signal peptide directing secretion. A propeptide spanning residues 23 to 48 (EELEAESQLMEVGMPDTELEAVDEER) is cleaved from the precursor. Intrachain disulfides connect Cys-52–Cys-66, Cys-56–Cys-77, and Cys-71–Cys-82.

The protein belongs to the neurotoxin 12 (Hwtx-2) family. 02 (Hwtx-2) subfamily. As to quaternary structure, monomer. As to expression, expressed by the venom gland.

It localises to the secreted. Functionally, neurotoxin active on both insects and mammals. This Cyriopagopus hainanus (Chinese bird spider) protein is U4-theraphotoxin-Hhn1a.